Consider the following 281-residue polypeptide: Ribose-phosphate pyrophosphokinase (281 aa).

Residues 33 to 35 (DGE) and 90 to 91 (RQ) each bind ATP. Mg(2+)-binding residues include His-123 and Asp-161. Lys-185 is a catalytic residue. The D-ribose 5-phosphate site is built by Arg-187 and Asp-211.

The protein belongs to the ribose-phosphate pyrophosphokinase family. Class III (archaeal) subfamily. It depends on Mg(2+) as a cofactor.

It is found in the cytoplasm. The catalysed reaction is D-ribose 5-phosphate + ATP = 5-phospho-alpha-D-ribose 1-diphosphate + AMP + H(+). Its pathway is metabolic intermediate biosynthesis; 5-phospho-alpha-D-ribose 1-diphosphate biosynthesis; 5-phospho-alpha-D-ribose 1-diphosphate from D-ribose 5-phosphate (route I): step 1/1. Functionally, involved in the biosynthesis of the central metabolite phospho-alpha-D-ribosyl-1-pyrophosphate (PRPP) via the transfer of pyrophosphoryl group from ATP to 1-hydroxyl of ribose-5-phosphate (Rib-5-P). This is Ribose-phosphate pyrophosphokinase from Halobacterium salinarum (strain ATCC 29341 / DSM 671 / R1).